A 477-amino-acid chain; its full sequence is Methylenetetrahydrofolate--tRNA-(uracil-5-)-methyltransferase TrmFO (477 aa).

15-20 contributes to the FAD binding site; sequence GAGLAG.

This sequence belongs to the MnmG family. TrmFO subfamily. Requires FAD as cofactor.

It localises to the cytoplasm. It catalyses the reaction uridine(54) in tRNA + (6R)-5,10-methylene-5,6,7,8-tetrahydrofolate + NADH + H(+) = 5-methyluridine(54) in tRNA + (6S)-5,6,7,8-tetrahydrofolate + NAD(+). The enzyme catalyses uridine(54) in tRNA + (6R)-5,10-methylene-5,6,7,8-tetrahydrofolate + NADPH + H(+) = 5-methyluridine(54) in tRNA + (6S)-5,6,7,8-tetrahydrofolate + NADP(+). Catalyzes the folate-dependent formation of 5-methyl-uridine at position 54 (M-5-U54) in all tRNAs. This is Methylenetetrahydrofolate--tRNA-(uracil-5-)-methyltransferase TrmFO from Nitrobacter winogradskyi (strain ATCC 25391 / DSM 10237 / CIP 104748 / NCIMB 11846 / Nb-255).